Consider the following 350-residue polypeptide: ATPase GET3 (350 aa).

26–33 (KGGVGKTT) is an ATP binding site. Aspartate 57 is an active-site residue. 2 residues coordinate ATP: glutamate 243 and asparagine 270. 2 residues coordinate Zn(2+): cysteine 282 and cysteine 285.

This sequence belongs to the arsA ATPase family. As to quaternary structure, homodimer. Component of the Golgi to ER traffic (GET) complex, which is composed of GET1, GET2 and GET3. Within the complex, GET1 and GET2 form a heterotetramer which is stabilized by phosphatidylinositol binding and which binds to the GET3 homodimer. Interacts with the chloride channel protein GEF1.

It localises to the cytoplasm. The protein resides in the endoplasmic reticulum. Its subcellular location is the golgi apparatus. Its function is as follows. ATPase required for the post-translational delivery of tail-anchored (TA) proteins to the endoplasmic reticulum. Recognizes and selectively binds the transmembrane domain of TA proteins in the cytosol. This complex then targets to the endoplasmic reticulum by membrane-bound receptors GET1 and GET2, where the tail-anchored protein is released for insertion. This process is regulated by ATP binding and hydrolysis. ATP binding drives the homodimer towards the closed dimer state, facilitating recognition of newly synthesized TA membrane proteins. ATP hydrolysis is required for insertion. Subsequently, the homodimer reverts towards the open dimer state, lowering its affinity for the GET1-GET2 receptor, and returning it to the cytosol to initiate a new round of targeting. Cooperates with the HDEL receptor ERD2 to mediate the ATP-dependent retrieval of resident ER proteins that contain a C-terminal H-D-E-L retention signal from the Golgi to the ER. Involved in low-level resistance to the oxyanions arsenite and arsenate, and in heat tolerance. The sequence is that of ATPase GET3 from Candida albicans (strain SC5314 / ATCC MYA-2876) (Yeast).